The chain runs to 164 residues: Crossover junction endodeoxyribonuclease RuvC (164 aa).

Catalysis depends on residues Asp7, Glu67, and Asp140. The Mg(2+) site is built by Asp7, Glu67, and Asp140.

It belongs to the RuvC family. In terms of assembly, homodimer which binds Holliday junction (HJ) DNA. The HJ becomes 2-fold symmetrical on binding to RuvC with unstacked arms; it has a different conformation from HJ DNA in complex with RuvA. In the full resolvosome a probable DNA-RuvA(4)-RuvB(12)-RuvC(2) complex forms which resolves the HJ. Mg(2+) serves as cofactor.

It is found in the cytoplasm. It carries out the reaction Endonucleolytic cleavage at a junction such as a reciprocal single-stranded crossover between two homologous DNA duplexes (Holliday junction).. Its function is as follows. The RuvA-RuvB-RuvC complex processes Holliday junction (HJ) DNA during genetic recombination and DNA repair. Endonuclease that resolves HJ intermediates. Cleaves cruciform DNA by making single-stranded nicks across the HJ at symmetrical positions within the homologous arms, yielding a 5'-phosphate and a 3'-hydroxyl group; requires a central core of homology in the junction. The consensus cleavage sequence is 5'-(A/T)TT(C/G)-3'. Cleavage occurs on the 3'-side of the TT dinucleotide at the point of strand exchange. HJ branch migration catalyzed by RuvA-RuvB allows RuvC to scan DNA until it finds its consensus sequence, where it cleaves and resolves the cruciform DNA. The chain is Crossover junction endodeoxyribonuclease RuvC from Alkaliphilus oremlandii (strain OhILAs) (Clostridium oremlandii (strain OhILAs)).